Consider the following 445-residue polypeptide: DNA repair protein RadA (445 aa).

Residues 10-27 (CSNCANISNKWSGQCFDC) form a C4-type zinc finger. Residue 90-97 (GEPGIGKS) participates in ATP binding. Residues 249-253 (KNRFG) carry the RadA KNRFG motif motif. Positions 348–445 (EIYLSIAGGL…HLQELKEIIK (98 aa)) are lon-protease-like.

The protein belongs to the RecA family. RadA subfamily.

Its function is as follows. DNA-dependent ATPase involved in processing of recombination intermediates, plays a role in repairing DNA breaks. Stimulates the branch migration of RecA-mediated strand transfer reactions, allowing the 3' invading strand to extend heteroduplex DNA faster. Binds ssDNA in the presence of ADP but not other nucleotides, has ATPase activity that is stimulated by ssDNA and various branched DNA structures, but inhibited by SSB. Does not have RecA's homology-searching function. This is DNA repair protein RadA from Rickettsia prowazekii (strain Madrid E).